A 353-amino-acid chain; its full sequence is Vomeronasal type-1 receptor 1 (353 aa).

The Extracellular portion of the chain corresponds to 1–56; the sequence is MVGDTLKLLSPLMTRYFFLLFYSTDSSDLNENQHPLDFDEMAFGKVKSGISFLIQT. The chain crosses the membrane as a helical span at residues 57–77; sequence GVGILGNSFLLCFYNLILFTG. Topologically, residues 78–84 are cytoplasmic; it reads HKLRPTD. The chain crosses the membrane as a helical span at residues 85 to 105; that stretch reads LILSQLALANSMVLFFKGIPQ. Residues 106–132 are Extracellular-facing; it reads TMAAFGLKYLLNDTGCKFVFYYHRVGT. Asn-117 is a glycosylation site (N-linked (GlcNAc...) asparagine). A helical membrane pass occupies residues 133-153; that stretch reads RVSLSTICLLNGFQAIKLNPS. Topologically, residues 154–169 are cytoplasmic; the sequence is ICRWMEIKIRSPRFID. Residues 170 to 190 form a helical membrane-spanning segment; the sequence is FCCLLCWAPHVLMNASVLLLV. The Extracellular segment spans residues 191–226; it reads NGPLNSKNSSAKNNYGYCSYKASKRFSSLHAVLYFS. N-linked (GlcNAc...) asparagine glycosylation is present at Asn-198. The chain crosses the membrane as a helical span at residues 227-247; the sequence is PDFMSLGFMVWASGSMVFFLY. Residues 248 to 274 lie on the Cytoplasmic side of the membrane; sequence RHKQQVQHNHSNRLSCRPSQEARATHT. The chain crosses the membrane as a helical span at residues 275–295; that stretch reads IMVLVSSFFVFYSVHSFLTIW. The Extracellular segment spans residues 296–303; that stretch reads TTVVANPG. A helical transmembrane segment spans residues 304 to 324; that stretch reads QWIVTNSVLVASCFPARSPFV. Topologically, residues 325 to 353 are cytoplasmic; it reads LIMSDTHISQFCFACRTRKTLFPNLVVMP.

It belongs to the G-protein coupled receptor 1 family. In terms of tissue distribution, expressed in the olfactory mucosa, very low expression in brain, lung and kidney.

Its subcellular location is the cell membrane. In terms of biological role, putative pheromone receptor. The chain is Vomeronasal type-1 receptor 1 (VN1R1) from Homo sapiens (Human).